The following is a 168-amino-acid chain: Diphosphoinositol polyphosphate phosphohydrolase 1 (168 aa).

Position 1 is an N-acetylmethionine (Met-1). Substrate contacts are provided by residues Arg-10, 18 to 20 (KKR), and 39 to 41 (SSR). The Nudix hydrolase domain occupies 17–142 (YKKRAACLCF…KPVQASYFEA (126 aa)). Residues Gly-50 and Glu-66 each coordinate Mg(2+). The Nudix box signature appears at 51-72 (GGMEPEEEPSVAAVREVCEEAG). Glu-69 (proton acceptor) is an active-site residue. Glu-70 provides a ligand contact to Mg(2+). Substrate-binding positions include 89 to 91 (RKH), Arg-115, and Lys-133.

It belongs to the Nudix hydrolase family. DIPP subfamily. As to quaternary structure, monomer. Requires Mg(2+) as cofactor. It depends on Mn(2+) as a cofactor. Zn(2+) serves as cofactor.

Its subcellular location is the cytoplasm. It is found in the nucleus. The catalysed reaction is diphospho-myo-inositol polyphosphate + H2O = myo-inositol polyphosphate + phosphate.. It carries out the reaction 5-diphospho-1D-myo-inositol 1,2,3,4,6-pentakisphosphate + H2O = 1D-myo-inositol hexakisphosphate + phosphate + H(+). It catalyses the reaction 3,5-bis(diphospho)-1D-myo-inositol 1,2,4,6-tetrakisphosphate + H2O = 3-diphospho-1D-myo-inositol 1,2,4,5,6-pentakisphosphate + phosphate + 2 H(+). The enzyme catalyses [phosphate](n+1) + n H2O = (n+1) phosphate + n H(+). The catalysed reaction is P(1),P(5)-bis(5'-adenosyl) pentaphosphate + H2O = ADP + ATP + 2 H(+). It carries out the reaction P(1),P(6)-bis(5'-adenosyl) hexaphosphate + H2O = 2 ATP + 2 H(+). It catalyses the reaction P(1),P(4)-bis(5'-adenosyl) tetraphosphate + H2O = AMP + ATP + 2 H(+). The enzyme catalyses a 5'-end (N(7)-methyl 5'-triphosphoguanosine)-ribonucleoside in mRNA + H2O = N(7)-methyl-GMP + a 5'-end diphospho-ribonucleoside in mRNA + 2 H(+). The catalysed reaction is a 5'-end (N(7)-methyl 5'-triphosphoguanosine)-ribonucleoside in mRNA + H2O = N(7)-methyl-GDP + a 5'-end phospho-ribonucleoside in mRNA + 2 H(+). With respect to regulation, diphosphoinositol polyphosphate phosphohydrolase is inhibited by fluoride and InsP6. Functionally, cleaves a beta-phosphate from the diphosphate groups in PP-InsP5 (diphosphoinositol pentakisphosphate) and [PP]2-InsP4 (bisdiphosphoinositol tetrakisphosphate), suggesting that it may play a role in signal transduction. InsP6 (inositol hexakisphosphate) is not a substrate. Acts as a negative regulator of the ERK1/2 pathway. Also able to catalyze the hydrolysis of dinucleoside oligophosphates, with diadenosine 5',5'''-P1,P6-hexaphosphate (Ap6A) and diadenosine 5',5'''- P1,P5-pentaphosphate (Ap5A) being the preferred substrates. The major reaction products are ADP and p4a from Ap6A and ADP and ATP from Ap5A. Also able to hydrolyze 5- phosphoribose 1-diphosphate. Acts as a decapping enzyme that can hydrolyze both monomethylated and unmethylated capped RNAs. Hydrolyzes monomethylated capped RNA after both the alpha- and beta-phosphates generating m7GMP + ppRNA and m7GDP + pRNA. Modulates the stability of a subset of mRNAs implicated in cell motility. Divalent cations zinc, magnesium and manganese determine its substrate specificity. Exhibits endopolyphosphatase activity in the presence of zinc ions. Exhibits diphosphoinositol polyphosphate phosphohydrolase in the presence of magnesium ions and diadenosine hexaphosphate hydrolase activity in the presence of manganese ions. Plays an important role in limiting DNA damage and maintaining cell survival upon oxidative stress via its endopolyphosphatase activity. In Rattus norvegicus (Rat), this protein is Diphosphoinositol polyphosphate phosphohydrolase 1.